The sequence spans 631 residues: Peptide-N(4)-(N-acetyl-beta-glucosaminyl)asparagine amidase (631 aa).

Positions 34-97 (EAVRILLVLL…PSSNAYTLPT (64 aa)) constitute a PUB domain. S126 bears the Phosphoserine mark. The Zn(2+) site is built by C246, C249, C272, and C273. Catalysis depends on C296, which acts as the Nucleophile. Active-site residues include H323 and D340. The 191-residue stretch at 441 to 631 (ELKGRSSGSL…YPFDLQVQLH (191 aa)) folds into the PAW domain.

This sequence belongs to the transglutaminase-like superfamily. PNGase family. The cofactor is Zn(2+).

The protein resides in the cytoplasm. The catalysed reaction is Hydrolysis of an N(4)-(acetyl-beta-D-glucosaminyl)asparagine residue in which the glucosamine residue may be further glycosylated, to yield a (substituted) N-acetyl-beta-D-glucosaminylamine and a peptide containing an aspartate residue.. In terms of biological role, specifically deglycosylates the denatured form of N-linked glycoproteins in the cytoplasm and assists their proteasome-mediated degradation. Cleaves the beta-aspartyl-glucosamine (GlcNAc) of the glycan and the amide side chain of Asn, converting Asn to Asp. Prefers proteins containing high-mannose over those bearing complex type oligosaccharides. Can recognize misfolded proteins in the endoplasmic reticulum that are exported to the cytosol to be destroyed and deglycosylate them, while it has no activity toward native proteins. Deglycosylation is a prerequisite for subsequent proteasome-mediated degradation of some, but not all, misfolded glycoproteins. This Drosophila melanogaster (Fruit fly) protein is Peptide-N(4)-(N-acetyl-beta-glucosaminyl)asparagine amidase (Pngl).